Consider the following 450-residue polypeptide: Chromosomal replication initiator protein DnaA (450 aa).

The domain I, interacts with DnaA modulators stretch occupies residues 1–71 (MEDVWLQAQS…SVRSLTDSHF (71 aa)). Residues 71–113 (FQVELQVAARQQEKTAKSPRKSHTEDELGPVESEKCAPAEFST) form a domain II region. Residues 82–103 (QEKTAKSPRKSHTEDELGPVES) are disordered. Residues 114-330 (NLNAKYTFDT…GMLIRLGAVA (217 aa)) are domain III, AAA+ region. Residues Gly-158, Gly-160, Lys-161, and Thr-162 each coordinate ATP. Residues 331–450 (SLTGKNITLD…IETLRKGLLN (120 aa)) form a domain IV, binds dsDNA region.

It belongs to the DnaA family. As to quaternary structure, oligomerizes as a right-handed, spiral filament on DNA at oriC.

The protein localises to the cytoplasm. Its function is as follows. Plays an essential role in the initiation and regulation of chromosomal replication. ATP-DnaA binds to the origin of replication (oriC) to initiate formation of the DNA replication initiation complex once per cell cycle. Binds the DnaA box (a 9 base pair repeat at the origin) and separates the double-stranded (ds)DNA. Forms a right-handed helical filament on oriC DNA; dsDNA binds to the exterior of the filament while single-stranded (ss)DNA is stabiized in the filament's interior. The ATP-DnaA-oriC complex binds and stabilizes one strand of the AT-rich DNA unwinding element (DUE), permitting loading of DNA polymerase. After initiation quickly degrades to an ADP-DnaA complex that is not apt for DNA replication. Binds acidic phospholipids. In Geobacter metallireducens (strain ATCC 53774 / DSM 7210 / GS-15), this protein is Chromosomal replication initiator protein DnaA.